The primary structure comprises 522 residues: 2-isopropylmalate synthase (522 aa).

One can recognise a Pyruvate carboxyltransferase domain in the interval 5–267 (VIIFDTTLRD…YTNINAREIH (263 aa)). The Mn(2+) site is built by aspartate 14, histidine 202, histidine 204, and asparagine 238. Residues 392 to 522 (VMEQLVVQSD…MQQTRELGGV (131 aa)) form a regulatory domain region.

The protein belongs to the alpha-IPM synthase/homocitrate synthase family. LeuA type 1 subfamily. In terms of assembly, homodimer. It depends on Mn(2+) as a cofactor.

The protein localises to the cytoplasm. The catalysed reaction is 3-methyl-2-oxobutanoate + acetyl-CoA + H2O = (2S)-2-isopropylmalate + CoA + H(+). The protein operates within amino-acid biosynthesis; L-leucine biosynthesis; L-leucine from 3-methyl-2-oxobutanoate: step 1/4. In terms of biological role, catalyzes the condensation of the acetyl group of acetyl-CoA with 3-methyl-2-oxobutanoate (2-ketoisovalerate) to form 3-carboxy-3-hydroxy-4-methylpentanoate (2-isopropylmalate). This is 2-isopropylmalate synthase from Shewanella amazonensis (strain ATCC BAA-1098 / SB2B).